The chain runs to 669 residues: DNA ligase (669 aa).

Residues 34-38, 83-84, and glutamate 114 contribute to the NAD(+) site; these read DAEYD and SL. Lysine 116 acts as the N6-AMP-lysine intermediate in catalysis. Arginine 137, glutamate 171, lysine 287, and lysine 311 together coordinate NAD(+). Residues cysteine 405, cysteine 408, cysteine 423, and cysteine 428 each contribute to the Zn(2+) site. Residues 591–669 form the BRCT domain; sequence NVESYFAGKT…EERFLQELNK (79 aa).

The protein belongs to the NAD-dependent DNA ligase family. LigA subfamily. It depends on Mg(2+) as a cofactor. Requires Mn(2+) as cofactor.

It carries out the reaction NAD(+) + (deoxyribonucleotide)n-3'-hydroxyl + 5'-phospho-(deoxyribonucleotide)m = (deoxyribonucleotide)n+m + AMP + beta-nicotinamide D-nucleotide.. DNA ligase that catalyzes the formation of phosphodiester linkages between 5'-phosphoryl and 3'-hydroxyl groups in double-stranded DNA using NAD as a coenzyme and as the energy source for the reaction. It is essential for DNA replication and repair of damaged DNA. The chain is DNA ligase from Bacillus anthracis (strain A0248).